The primary structure comprises 430 residues: Adenylosuccinate synthetase (430 aa).

Residues 12-18 (GDEGKGK) and 40-42 (GHT) contribute to the GTP site. Asp-13 acts as the Proton acceptor in catalysis. Positions 13 and 40 each coordinate Mg(2+). IMP-binding positions include 13–16 (DEGK), 38–41 (NAGH), Thr-130, Arg-144, Gln-224, Thr-239, and Arg-303. The Proton donor role is filled by His-41. A substrate-binding site is contributed by 299–305 (VNTGRKR). GTP is bound by residues Arg-305, 331-333 (KLD), and 413-415 (STS).

Belongs to the adenylosuccinate synthetase family. As to quaternary structure, homodimer. It depends on Mg(2+) as a cofactor.

The protein resides in the cytoplasm. It catalyses the reaction IMP + L-aspartate + GTP = N(6)-(1,2-dicarboxyethyl)-AMP + GDP + phosphate + 2 H(+). Its pathway is purine metabolism; AMP biosynthesis via de novo pathway; AMP from IMP: step 1/2. Plays an important role in the de novo pathway of purine nucleotide biosynthesis. Catalyzes the first committed step in the biosynthesis of AMP from IMP. This Nitrobacter hamburgensis (strain DSM 10229 / NCIMB 13809 / X14) protein is Adenylosuccinate synthetase.